Consider the following 115-residue polypeptide: NADH-ubiquinone oxidoreductase chain 3 (115 aa).

The next 3 membrane-spanning stretches (helical) occupy residues 3–23, 55–75, and 84–104; these read LMLA…IAFW, FFLV…LLPL, and LNTM…SLAY.

It belongs to the complex I subunit 3 family. Core subunit of respiratory chain NADH dehydrogenase (Complex I) which is composed of 45 different subunits. Interacts with TMEM186. Interacts with TMEM242.

The protein resides in the mitochondrion inner membrane. The enzyme catalyses a ubiquinone + NADH + 5 H(+)(in) = a ubiquinol + NAD(+) + 4 H(+)(out). Its function is as follows. Core subunit of the mitochondrial membrane respiratory chain NADH dehydrogenase (Complex I) which catalyzes electron transfer from NADH through the respiratory chain, using ubiquinone as an electron acceptor. Essential for the catalytic activity of complex I. In Bos indicus (Zebu), this protein is NADH-ubiquinone oxidoreductase chain 3.